The sequence spans 101 residues: Large ribosomal subunit protein bL21 (101 aa).

It belongs to the bacterial ribosomal protein bL21 family. Part of the 50S ribosomal subunit. Contacts protein L20.

In terms of biological role, this protein binds to 23S rRNA in the presence of protein L20. The chain is Large ribosomal subunit protein bL21 from Beutenbergia cavernae (strain ATCC BAA-8 / DSM 12333 / CCUG 43141 / JCM 11478 / NBRC 16432 / NCIMB 13614 / HKI 0122).